We begin with the raw amino-acid sequence, 438 residues long: Xylose isomerase (438 aa).

Active-site residues include His-100 and Asp-103. 7 residues coordinate Mg(2+): Glu-231, Glu-267, His-270, Asp-295, Asp-306, Asp-308, and Asp-338.

The protein belongs to the xylose isomerase family. As to quaternary structure, homotetramer. It depends on Mg(2+) as a cofactor.

It is found in the cytoplasm. It catalyses the reaction alpha-D-xylose = alpha-D-xylulofuranose. In Caldanaerobacter subterraneus subsp. yonseiensis (Thermoanaerobacter yonseiensis), this protein is Xylose isomerase.